The sequence spans 303 residues: Fe-S cluster assembly protein DRE2 (303 aa).

Positions 1 to 125 are N-terminal SAM-like domain; it reads MTHSRTALVL…WQKRAVTASA (125 aa). Positions 126–188 are linker; sequence PVKLAPRQPV…GDAPIAENDL (63 aa). Positions 202, 213, 216, and 218 each coordinate [2Fe-2S] cluster. Residues 202–218 form a fe-S binding site A region; that stretch reads CGRTQTRRRKACKDCTC. The [4Fe-4S] cluster site is built by C266, C269, C277, and C280. 2 short sequence motifs (cx2C motif) span residues 266–269 and 277–280; these read CGSC and CSGC. Positions 266–280 are fe-S binding site B; the sequence is CGSCSLGDAFRCSGC.

The protein belongs to the anamorsin family. In terms of assembly, monomer. Interacts with TAH18. Interacts with MIA40. Requires [2Fe-2S] cluster as cofactor. [4Fe-4S] cluster is required as a cofactor.

It localises to the cytoplasm. It is found in the mitochondrion intermembrane space. Functionally, component of the cytosolic iron-sulfur (Fe-S) protein assembly (CIA) machinery required for the maturation of extramitochondrial Fe-S proteins. Part of an electron transfer chain functioning in an early step of cytosolic Fe-S biogenesis, facilitating the de novo assembly of a [4Fe-4S] cluster on the scaffold complex CFD1-NBP35. Electrons are transferred to DRE2 from NADPH via the FAD- and FMN-containing protein TAH18. TAH18-DRE2 are also required for the assembly of the diferric tyrosyl radical cofactor of ribonucleotide reductase (RNR), probably by providing electrons for reduction during radical cofactor maturation in the catalytic small subunit RNR2. The polypeptide is Fe-S cluster assembly protein DRE2 (Eremothecium gossypii (strain ATCC 10895 / CBS 109.51 / FGSC 9923 / NRRL Y-1056) (Yeast)).